The primary structure comprises 179 residues: Embryo-specific protein ATS3A (179 aa).

An N-terminal signal peptide occupies residues 1-22 (MLRLAIPLFLFALCSFTLFSSA). The PLAT domain occupies 48–158 (CSYTVIIKTS…NSVWYGFNVC (111 aa)).

In terms of assembly, interacts with EULS3 (via N-terminus). In terms of tissue distribution, expressed in roots, rosette leaves, stems, cauline leaves and flowers.

The protein resides in the secreted. Its function is as follows. May play a role during embryo development. This is Embryo-specific protein ATS3A from Arabidopsis thaliana (Mouse-ear cress).